The sequence spans 249 residues: tRNA pseudouridine synthase A (249 aa).

The Nucleophile role is filled by D52. Y111 contributes to the substrate binding site.

The protein belongs to the tRNA pseudouridine synthase TruA family. In terms of assembly, homodimer.

The catalysed reaction is uridine(38/39/40) in tRNA = pseudouridine(38/39/40) in tRNA. Formation of pseudouridine at positions 38, 39 and 40 in the anticodon stem and loop of transfer RNAs. The chain is tRNA pseudouridine synthase A from Caulobacter sp. (strain K31).